The chain runs to 358 residues: Peptide chain release factor 1 (358 aa).

Q235 carries the N5-methylglutamine modification.

This sequence belongs to the prokaryotic/mitochondrial release factor family. In terms of processing, methylated by PrmC. Methylation increases the termination efficiency of RF1.

It localises to the cytoplasm. Peptide chain release factor 1 directs the termination of translation in response to the peptide chain termination codons UAG and UAA. The chain is Peptide chain release factor 1 from Neisseria meningitidis serogroup C (strain 053442).